The chain runs to 151 residues: Cytochrome c-type biogenesis protein CcmE (151 aa).

At 1-8 (MNPLRKKR) the chain is on the cytoplasmic side. A helical; Signal-anchor for type II membrane protein transmembrane segment spans residues 9 to 29 (LLIILAILVGVGIAVGLALSA). The Periplasmic portion of the chain corresponds to 30 to 151 (LKENINLFYT…QSAPTPAKEG (122 aa)). The heme site is built by H124 and Y128. The segment at 131–151 (PEVTKALKDSGQSAPTPAKEG) is disordered.

Belongs to the CcmE/CycJ family.

It localises to the cell inner membrane. In terms of biological role, heme chaperone required for the biogenesis of c-type cytochromes. Transiently binds heme delivered by CcmC and transfers the heme to apo-cytochromes in a process facilitated by CcmF and CcmH. The protein is Cytochrome c-type biogenesis protein CcmE of Pseudomonas fluorescens (strain ATCC BAA-477 / NRRL B-23932 / Pf-5).